The following is a 353-amino-acid chain: Mitochondrial import inner membrane translocase subunit TIM50 (353 aa).

The transit peptide at 1–44 (MAASAAVFSRLRSGLRLGSRGLCTRLATPPRRAPDQAAEIGSRG) directs the protein to the mitochondrion. Residues 25-60 (RLATPPRRAPDQAAEIGSRGSTKAQGPQQQPGSEGP) are disordered. Phosphoserine is present on Ser-45. The Mitochondrial matrix portion of the chain corresponds to 45–65 (STKAQGPQQQPGSEGPSYAKK). The span at 49 to 60 (QGPQQQPGSEGP) shows a compositional bias: low complexity. Residues 66–86 (VALWLAGLLGAGGTVSVVYIF) form a helical membrane-spanning segment. Residues 87–353 (GNNPVDENGA…SRLWPRSKQP (267 aa)) are Mitochondrial intermembrane-facing. One can recognise an FCP1 homology domain in the interval 143-286 (YYQPPYTLVL…LDLSAFLKTI (144 aa)). Position 341 is a phosphoserine (Ser-341).

This sequence belongs to the TIM50 family. Component of the TIM23 complex at least composed of TIMM23, TIMM17 (TIMM17A or TIMM17B) and TIMM50; within this complex, directly interacts with TIMM23. The complex interacts with the TIMM44 component of the PAM complex and with DNAJC15. In terms of assembly, interacts with COIL and snRNPs. Widely expressed. Expressed at higher level in brain, kidney and liver (at protein level).

It is found in the mitochondrion inner membrane. The protein resides in the nucleus speckle. Its function is as follows. Essential component of the TIM23 complex, a complex that mediates the translocation of transit peptide-containing proteins across the mitochondrial inner membrane. Has some phosphatase activity in vitro; however such activity may not be relevant in vivo. In terms of biological role, may participate in the release of snRNPs and SMN from the Cajal body. The protein is Mitochondrial import inner membrane translocase subunit TIM50 (TIMM50) of Homo sapiens (Human).